A 219-amino-acid polypeptide reads, in one-letter code: Deoxyribose-phosphate aldolase (219 aa).

The active-site Proton donor/acceptor is aspartate 88. Lysine 150 acts as the Schiff-base intermediate with acetaldehyde in catalysis. Lysine 179 serves as the catalytic Proton donor/acceptor.

It belongs to the DeoC/FbaB aldolase family. DeoC type 1 subfamily.

Its subcellular location is the cytoplasm. It carries out the reaction 2-deoxy-D-ribose 5-phosphate = D-glyceraldehyde 3-phosphate + acetaldehyde. The protein operates within carbohydrate degradation; 2-deoxy-D-ribose 1-phosphate degradation; D-glyceraldehyde 3-phosphate and acetaldehyde from 2-deoxy-alpha-D-ribose 1-phosphate: step 2/2. Functionally, catalyzes a reversible aldol reaction between acetaldehyde and D-glyceraldehyde 3-phosphate to generate 2-deoxy-D-ribose 5-phosphate. In Aquifex aeolicus (strain VF5), this protein is Deoxyribose-phosphate aldolase.